A 200-amino-acid polypeptide reads, in one-letter code: Phospholipase A2 inhibitor LNF1 (200 aa).

The N-terminal stretch at 1 to 19 is a signal peptide; that stretch reads MKYLHTICLLFIFVARGNS. Cystine bridges form between Cys-22-Cys-46, Cys-25-Cys-32, Cys-39-Cys-67, Cys-73-Cys-94, Cys-95-Cys-100, Cys-118-Cys-143, Cys-136-Cys-165, and Cys-169-Cys-191. Asn-176 is a glycosylation site (N-linked (GlcNAc...) asparagine).

Belongs to the CNF-like-inhibitor family. Occurs as a mixture of oligomers. Tetrameric arrangement appears to be the predominant quaternary structure. As to expression, expressed by the liver.

It is found in the secreted. Its function is as follows. Inhibits the enzymatic activity of phospholipase A2 (PA2). This chain is Phospholipase A2 inhibitor LNF1, found in Lachesis muta muta (Bushmaster).